The following is a 166-amino-acid chain: Regulatory protein RecX (166 aa).

This sequence belongs to the RecX family.

The protein resides in the cytoplasm. Functionally, modulates RecA activity. The chain is Regulatory protein RecX from Escherichia fergusonii (strain ATCC 35469 / DSM 13698 / CCUG 18766 / IAM 14443 / JCM 21226 / LMG 7866 / NBRC 102419 / NCTC 12128 / CDC 0568-73).